Consider the following 191-residue polypeptide: Small t antigen (191 aa).

M1 bears the N-acetylmethionine; by host mark. The J domain maps to 12-80 (QLMQLLCLDM…DLNEEEDNIW (69 aa)). Residues 117 to 130 (CIHGYNHECQCIHC) form a C4-type; atypical zinc finger. The H1C3-type; atypical zinc finger occupies 136-157 (HKEKYKIYRKPPVWIECYCYKC).

As to quaternary structure, interacts with host PPP2R1A; the interaction inhibits PP2A activity.

The protein resides in the host cytoplasm. It localises to the host nucleus. Functionally, promotes efficient viral genome replication by accelerating both G1 and S phase progression of the cell cycle. Inhibits host PP2A by binding to the A subunit, thereby displacing lower affinity regulatory B subunit. Inactivation of PP2A in turn results in the transactivation of cyclin A and cyclin D1 promoters. Late during the infection cycle, ST may induce dephosphorylation of host MTOR, leading to the inhibition of cap-dependent translation. May establish and maintain high levels of viral genomes during persistent infection in cell culture. The protein is Small t antigen of Homo sapiens (Human).